The primary structure comprises 512 residues: Maturase K (512 aa).

This sequence belongs to the intron maturase 2 family. MatK subfamily.

The protein localises to the plastid. The protein resides in the chloroplast. Usually encoded in the trnK tRNA gene intron. Probably assists in splicing its own and other chloroplast group II introns. This chain is Maturase K, found in Acer platanoides (Norway maple).